Here is a 517-residue protein sequence, read N- to C-terminus: Serine hydroxymethyltransferase 2, mitochondrial (517 aa).

The N-terminal 29 residues, 1–29, are a transit peptide targeting the mitochondrion; that stretch reads MALALRRLSSSVKKPISLLSSNGGSLRFM. Residue Ser82 participates in L-serine binding. Residues Ser82, Tyr102, Glu104, Tyr112, 148-150, and His177 each bind pemetrexed; that span reads SGS. L-serine-binding residues include Glu104 and Tyr112. Glu104 contacts methotrexate. Residue 184–186 coordinates methotrexate; sequence TDT. Pemetrexed is bound by residues Ser232 and His260. L-serine contacts are provided by His260 and Lys286. At Lys286 the chain carries N6-(pyridoxal phosphate)lysine. Residue Gly331 participates in pemetrexed binding. Lys414 is a binding site for methotrexate. Arg430 contacts L-serine. Arg430 lines the pemetrexed pocket.

The protein belongs to the SHMT family. Homotetramer. It depends on pyridoxal 5'-phosphate as a cofactor. Ubiquitous. Mainly expressed in the shoot apical meristem and roots. Also detected in the leaf vasculature, especially in the protoxylem and adjacent cell layers.

The protein localises to the mitochondrion. The catalysed reaction is (6R)-5,10-methylene-5,6,7,8-tetrahydrofolate + glycine + H2O = (6S)-5,6,7,8-tetrahydrofolate + L-serine. It participates in one-carbon metabolism; tetrahydrofolate interconversion. With respect to regulation, inhibited by the antifolate drugs methotrexate and pemetrexed. Functions outside the photorespiratory pathway in catalyzing the interconversion of serine and glycine with the conversion of tetrahydrofolate (THF) into 5,10-methylene-THF. The chain is Serine hydroxymethyltransferase 2, mitochondrial from Arabidopsis thaliana (Mouse-ear cress).